The primary structure comprises 247 residues: Uridylate kinase (247 aa).

Residue 15–18 participates in ATP binding; sequence KLSG. The tract at residues 23–28 is involved in allosteric activation by GTP; the sequence is GDEGFG. Gly-57 lines the UMP pocket. Residues Gly-58 and Arg-62 each coordinate ATP. Residues Asp-77 and 138 to 145 contribute to the UMP site; that span reads TGNPFFTT. ATP contacts are provided by Thr-165, Tyr-171, and Asp-174.

The protein belongs to the UMP kinase family. Homohexamer.

The protein resides in the cytoplasm. The catalysed reaction is UMP + ATP = UDP + ADP. It functions in the pathway pyrimidine metabolism; CTP biosynthesis via de novo pathway; UDP from UMP (UMPK route): step 1/1. Its activity is regulated as follows. Allosterically activated by GTP. Inhibited by UTP. Its function is as follows. Catalyzes the reversible phosphorylation of UMP to UDP. The protein is Uridylate kinase of Saccharophagus degradans (strain 2-40 / ATCC 43961 / DSM 17024).